The sequence spans 333 residues: Taste receptor type 2 member 123 (333 aa).

Residues 1-14 (MFSQKTNYSHLFTF) lie on the Extracellular side of the membrane. The chain crosses the membrane as a helical span at residues 15-37 (SIIFYVEIVTGILGNGFIALVNI). At 38 to 57 (MDWLKRRRISTADQILTALA) the chain is on the cytoplasmic side. A helical transmembrane segment spans residues 58–77 (LTRLIYVWSVLICILLLFLC). Residues 78 to 91 (PHLSMRPEMFTAIG) are Extracellular-facing. A helical membrane pass occupies residues 92–114 (VIWVVDNHFSIWLATCLGVFYFL). Topologically, residues 115–133 (KIASFSNSLFLYLKWRVKK) are cytoplasmic. A helical membrane pass occupies residues 134 to 156 (VVLMIILISLIFLMLNISSLGMY). The Extracellular segment spans residues 157–204 (DHFSIDVYEGNMSYNLVDSTHFPRIFLFTNSSKVFLIANSSHVFLPIN). Residues asparagine 167, asparagine 186, and asparagine 195 are each glycosylated (N-linked (GlcNAc...) asparagine). A helical transmembrane segment spans residues 205 to 227 (SLFMLIPFTVSLVAFFVLFLSLW). At 228–250 (KHHKKMQVNAKGPRDASTMAHTK) the chain is on the cytoplasmic side. The helical transmembrane segment at 251 to 273 (ALQIGFSFLLLYAIYLLFIITGI) threads the bilayer. Topologically, residues 274–282 (LNLDLMRCI) are extracellular. The chain crosses the membrane as a helical span at residues 283–305 (VILLFDHISGAVFSISHSFVLIL). Residues 306-333 (GNSKLRQATLSVLPCLRCRSKDMDTVVF) are Cytoplasmic-facing.

The protein belongs to the G-protein coupled receptor T2R family. In terms of tissue distribution, expressed in subsets of taste receptor cells of the tongue and palate epithelium and exclusively in gustducin-positive cells. Expressed in the antrum and fundus (part of the stomach), duodenum and in gastric endocrine cells.

It is found in the membrane. Functionally, gustducin-coupled receptor implicated in the perception of bitter compounds in the oral cavity and the gastrointestinal tract. Signals through PLCB2 and the calcium-regulated cation channel TRPM5. The polypeptide is Taste receptor type 2 member 123 (Tas2r123) (Rattus norvegicus (Rat)).